The following is an 85-amino-acid chain: Beta-insect depressant toxin Lqh-dprIT3e (85 aa).

The first 21 residues, 1–21, serve as a signal peptide directing secretion; that stretch reads MKLLLLLTISASMLIEGLVNA. The LCN-type CS-alpha/beta domain occupies 22-82; sequence DGYIRGGDGC…EWDYETDTCG (61 aa). 4 disulfides stabilise this stretch: cysteine 31-cysteine 81, cysteine 35-cysteine 56, cysteine 42-cysteine 63, and cysteine 46-cysteine 65. Glycine 82 carries the post-translational modification Glycine amide.

It belongs to the long (4 C-C) scorpion toxin superfamily. Sodium channel inhibitor family. Beta subfamily. In terms of tissue distribution, expressed by the venom gland.

The protein localises to the secreted. In terms of biological role, depressant insect beta-toxins cause a transient contraction paralysis followed by a slow flaccid paralysis. They bind voltage-independently at site-4 of sodium channels (Nav) and block action potentials, primarily by depolarizing the axonal membrane and suppressing the sodium current. This depressant toxin is active only on insects. It is found in a relatively small amount in the venom. This is Beta-insect depressant toxin Lqh-dprIT3e from Leiurus hebraeus (Hebrew deathstalker scorpion).